Consider the following 240-residue polypeptide: Probable transcriptional regulatory protein PBPRB1582 (240 aa).

This sequence belongs to the TACO1 family.

Its subcellular location is the cytoplasm. In Photobacterium profundum (strain SS9), this protein is Probable transcriptional regulatory protein PBPRB1582.